Reading from the N-terminus, the 313-residue chain is Ribosomal RNA small subunit methyltransferase H (313 aa).

S-adenosyl-L-methionine-binding positions include 35–37 (GGH), D55, F79, D100, and Q107.

This sequence belongs to the methyltransferase superfamily. RsmH family.

It localises to the cytoplasm. It carries out the reaction cytidine(1402) in 16S rRNA + S-adenosyl-L-methionine = N(4)-methylcytidine(1402) in 16S rRNA + S-adenosyl-L-homocysteine + H(+). Specifically methylates the N4 position of cytidine in position 1402 (C1402) of 16S rRNA. This chain is Ribosomal RNA small subunit methyltransferase H, found in Burkholderia pseudomallei (strain 1106a).